Consider the following 317-residue polypeptide: tRNA(Ile)-lysidine synthase (317 aa).

32–37 lines the ATP pocket; sequence SGGVDS.

The protein belongs to the tRNA(Ile)-lysidine synthase family.

It is found in the cytoplasm. It catalyses the reaction cytidine(34) in tRNA(Ile2) + L-lysine + ATP = lysidine(34) in tRNA(Ile2) + AMP + diphosphate + H(+). Functionally, ligates lysine onto the cytidine present at position 34 of the AUA codon-specific tRNA(Ile) that contains the anticodon CAU, in an ATP-dependent manner. Cytidine is converted to lysidine, thus changing the amino acid specificity of the tRNA from methionine to isoleucine. In Aquifex aeolicus (strain VF5), this protein is tRNA(Ile)-lysidine synthase.